Reading from the N-terminus, the 466-residue chain is Coagulation factor VII (466 aa).

An N-terminal signal peptide occupies residues 1-20 (MVSQALRLLCLLLGLQGCLA). A propeptide spanning residues 21–60 (AGGVAKASGGETRDMPWKPGPHRVFVTQEEAHGVLHRRRR) is cleaved from the precursor. Residues 61–105 (ANAFLEELRPGSLERECKEEQCSFEEAREIFKDAERTKLFWISYS) enclose the Gla domain. Glu-66, Glu-67, Glu-74, Glu-76, Glu-79, Glu-80, Glu-85, Glu-86, Glu-89, and Glu-95 each carry 4-carboxyglutamate. Cys-77 and Cys-82 are disulfide-bonded. Residues 106-142 (DGDQCASSPCQNGGSCKDQLQSYICFCLPAFEGRNCE) form the EGF-like 1; calcium-binding domain. 10 disulfides stabilise this stretch: Cys-110–Cys-121, Cys-115–Cys-130, Cys-132–Cys-141, Cys-151–Cys-162, Cys-158–Cys-172, Cys-174–Cys-187, Cys-195–Cys-322, Cys-219–Cys-224, Cys-238–Cys-254, and Cys-370–Cys-389. O-linked (Glc...) serine; alternate glycosylation is present at Ser-112. An O-linked (Xyl...) serine; alternate glycan is attached at Ser-112. Residue Ser-120 is glycosylated (O-linked (Fuc) serine). Asp-123 is subject to (3R)-3-hydroxyaspartate. Positions 147–188 (DQLICVNENGGCEQYCSDHTGTKRSCRCHEGYSLLADGVSCT) constitute an EGF-like 2 domain. N-linked (GlcNAc...) asparagine glycosylation is present at Asn-205. Residues 213–452 (IVGGKVCPKG…YIEWLQKLMR (240 aa)) enclose the Peptidase S1 domain. Catalysis depends on charge relay system residues His-253 and Asp-302. An N-linked (GlcNAc...) asparagine glycan is attached at Asn-382. Asp-398 is a substrate binding site. Cysteines 400 and 428 form a disulfide. Catalysis depends on Ser-404, which acts as the Charge relay system.

This sequence belongs to the peptidase S1 family. As to quaternary structure, heterodimer of a light chain and a heavy chain linked by a disulfide bond. Interacts (activated) with iripin-8, a serine protease inhibitor from Ixodes ricinus saliva. The vitamin K-dependent, enzymatic carboxylation of some glutamate residues allows the modified protein to bind calcium. In terms of processing, the iron and 2-oxoglutarate dependent 3-hydroxylation of aspartate and asparagine is (R) stereospecific within EGF domains. Post-translationally, O- and N-glycosylated. N-glycosylation at Asn-205 occurs cotranslationally and is mediated by STT3A-containing complexes, while glycosylation at Asn-382 is post-translational and is mediated STT3B-containing complexes before folding. O-fucosylated by POFUT1 on a conserved serine or threonine residue found in the consensus sequence C2-X(4,5)-[S/T]-C3 of EGF domains, where C2 and C3 are the second and third conserved cysteines. Can be either O-glucosylated or O-xylosylated at Ser-112 by POGLUT1 in vitro. In terms of tissue distribution, plasma.

It localises to the secreted. It catalyses the reaction Selective cleavage of Arg-|-Ile bond in factor X to form factor Xa.. Its function is as follows. Initiates the extrinsic pathway of blood coagulation. Serine protease that circulates in the blood in a zymogen form. Factor VII is converted to factor VIIa by factor Xa, factor XIIa, factor IXa, or thrombin by minor proteolysis. In the presence of tissue factor and calcium ions, factor VIIa then converts factor X to factor Xa by limited proteolysis. Factor VIIa also converts factor IX to factor IXa in the presence of tissue factor and calcium. The protein is Coagulation factor VII (F7) of Homo sapiens (Human).